The primary structure comprises 406 residues: Putative odorant receptor 65b (406 aa).

At 1-55 the chain is on the cytoplasmic side; that stretch reads MDIQRFLKFYKVGWKTYRDPLMEASHSSIYYWREQMKAMALFTTTEERLLPYRSK. The chain crosses the membrane as a helical span at residues 56–76; it reads WHTLVYIQMVIFFASMSFGLT. The Extracellular segment spans residues 77 to 88; that stretch reads ESMGDHVQMGRD. A helical membrane pass occupies residues 89-109; sequence LAFILGAFFIIFKTYYFCWYG. Over 110–144 the chain is Cytoplasmic; it reads DELDQVISDLDALHPWAQKGPNPVEYQTGKRWYFV. A helical membrane pass occupies residues 145 to 165; the sequence is MAFFLATSWSFFLCILLLLLI. Over 166-218 the chain is Extracellular; it reads TSPMWVHQQNLPFHAAFPFQWHEKSLHPISHAIIYLFQSYFAVYCLTWLLCIE. A helical transmembrane segment spans residues 219–239; that stretch reads GLSICIYAEITFGIEVLCLEL. Over 240 to 275 the chain is Cytoplasmic; that stretch reads RQIHRHNYGLQELRMETNRLVKLHQKIVEILDRTND. Residues 276-296 form a helical membrane-spanning segment; it reads VFHGTLIMQMGVNFSLVSLSV. Residues 297–307 lie on the Extracellular side of the membrane; it reads LEAVEARKDPK. The chain crosses the membrane as a helical span at residues 308-328; it reads VVAQFAVLMLLALGHLSMWSY. The Cytoplasmic segment spans residues 329–381; sequence CGDQLSQKSLQISEAAYEAYDPTKGSKDVYRDLCVIIRRGQDPLIMRASPFPS. A helical membrane pass occupies residues 382–402; sequence FNLINYSAILNQCYGILTFLL. The Extracellular segment spans residues 403–406; the sequence is KTLD.

Belongs to the insect chemoreceptor superfamily. Heteromeric odorant receptor channel (TC 1.A.69) family. Or49a subfamily. In terms of assembly, interacts with Orco. Complexes exist early in the endomembrane system in olfactory sensory neurons (OSNs), coupling these complexes to the conserved ciliary trafficking pathway.

The protein localises to the cell membrane. Functionally, odorant receptor which mediates acceptance or avoidance behavior, depending on its substrates. The odorant receptor repertoire encodes a large collection of odor stimuli that vary widely in identity, intensity, and duration. May form a complex with Orco to form odorant-sensing units, providing sensitive and prolonged odorant signaling and calcium permeability. The polypeptide is Putative odorant receptor 65b (Or65b) (Drosophila melanogaster (Fruit fly)).